Consider the following 354-residue polypeptide: Guanine nucleotide-binding protein G(i) subunit alpha-1 (354 aa).

Gly-2 carries N-myristoyl glycine lipidation. Cys-3 carries S-palmitoyl cysteine lipidation. A G-alpha domain is found at 32 to 354 (REVKLLLLGA…KNNLKDCGLF (323 aa)). The interval 35 to 48 (KLLLLGAGESGKST) is G1 motif. GTP-binding positions include 43 to 48 (ESGKST), 150 to 151 (DS), and 175 to 178 (LRTR). A Mg(2+)-binding site is contributed by Ser-47. A G2 motif region spans residues 173 to 181 (DVLRTRVKT). Position 181 (Thr-181) interacts with Mg(2+). Residues 196 to 205 (FKMFDVGGQR) form a G3 motif region. Residues 200 to 204 (DVGGQ), 269 to 272 (NKKD), and Ala-326 contribute to the GTP site. The segment at 265–272 (ILFLNKKD) is G4 motif. The G5 motif stretch occupies residues 324 to 329 (TCATDT).

Belongs to the G-alpha family. G(i/o/t/z) subfamily. Heterotrimeric G proteins are composed of 3 units; alpha, beta and gamma. The alpha chain contains the guanine nucleotide binding site. Part of a spindle orientation complex. Identified in complex with the beta subunit GNB1 and the gamma subunit GNG1. Identified in complex with the beta subunit GNB1 and the gamma subunit GNG2. GTP binding causes dissociation of the heterotrimer, liberating the individual subunits so that they can interact with downstream effector proteins. Post-translationally, myristoylation at Gly-2 is required for membrane anchoring before palmitoylation. In terms of processing, palmitoylation at Cys-3 varies with membrane lipid composition.

Its subcellular location is the nucleus. It localises to the cytoplasm. The protein resides in the cell membrane. It is found in the cytoskeleton. The protein localises to the microtubule organizing center. Its subcellular location is the centrosome. It localises to the cell cortex. The protein resides in the membrane. The catalysed reaction is GTP + H2O = GDP + phosphate + H(+). In terms of biological role, guanine nucleotide-binding proteins (G proteins) function as transducers downstream of G protein-coupled receptors (GPCRs) in numerous signaling cascades. The alpha chain contains the guanine nucleotide binding site and alternates between an active, GTP-bound state and an inactive, GDP-bound state. Signaling by an activated GPCR promotes GDP release and GTP binding. The alpha subunit has a low GTPase activity that converts bound GTP to GDP, thereby terminating the signal. Both GDP release and GTP hydrolysis are modulated by numerous regulatory proteins. Signaling is mediated via effector proteins, such as adenylate cyclase. Inhibits adenylate cyclase activity of ADCY1, ADCY5 and ADCY6, leading to decreased intracellular cAMP levels. Required for cortical dynein-dynactin complex recruitment during metaphase. The polypeptide is Guanine nucleotide-binding protein G(i) subunit alpha-1 (GNAI1) (Gallus gallus (Chicken)).